We begin with the raw amino-acid sequence, 278 residues long: Undecaprenyl-diphosphatase 2 (278 aa).

7 helical membrane passes run 43-63, 88-108, 119-139, 149-169, 194-214, 226-246, and 254-274; these read GAAF…VYFW, ARLG…GLFF, LYIT…ADRI, LIWR…IPGV, FLLA…KSIG, LATL…LKLV, and FVWY…TGVI.

It belongs to the UppP family.

Its subcellular location is the cell inner membrane. It catalyses the reaction di-trans,octa-cis-undecaprenyl diphosphate + H2O = di-trans,octa-cis-undecaprenyl phosphate + phosphate + H(+). Functionally, catalyzes the dephosphorylation of undecaprenyl diphosphate (UPP). Confers resistance to bacitracin. The protein is Undecaprenyl-diphosphatase 2 of Agrobacterium fabrum (strain C58 / ATCC 33970) (Agrobacterium tumefaciens (strain C58)).